A 335-amino-acid polypeptide reads, in one-letter code: Glycerol-3-phosphate dehydrogenase [NAD(P)+] (335 aa).

NADPH contacts are provided by F11, R31, and K107. Sn-glycerol 3-phosphate contacts are provided by K107 and G135. NADPH is bound at residue A139. K190, D245, S255, R256, and N257 together coordinate sn-glycerol 3-phosphate. The active-site Proton acceptor is K190. R256 serves as a coordination point for NADPH. NADPH contacts are provided by L280 and E282.

It belongs to the NAD-dependent glycerol-3-phosphate dehydrogenase family.

The protein resides in the cytoplasm. It catalyses the reaction sn-glycerol 3-phosphate + NAD(+) = dihydroxyacetone phosphate + NADH + H(+). The enzyme catalyses sn-glycerol 3-phosphate + NADP(+) = dihydroxyacetone phosphate + NADPH + H(+). Its pathway is membrane lipid metabolism; glycerophospholipid metabolism. Functionally, catalyzes the reduction of the glycolytic intermediate dihydroxyacetone phosphate (DHAP) to sn-glycerol 3-phosphate (G3P), the key precursor for phospholipid synthesis. The protein is Glycerol-3-phosphate dehydrogenase [NAD(P)+] of Anaplasma marginale (strain St. Maries).